We begin with the raw amino-acid sequence, 56 residues long: Attractin (56 aa).

Cystine bridges form between cysteine 4–cysteine 41, cysteine 13–cysteine 33, and cysteine 20–cysteine 26.

Produced by the albumen gland of the egg cordons.

It is found in the secreted. Its function is as follows. Water-borne pheromone that attract the marine mollusk Aplysia into breeding aggregations and coordinate male and female reproductive behavior within the aggregation. In Aplysia vaccaria (California black sea hare), this protein is Attractin (ATT).